The following is a 394-amino-acid chain: Cytochrome b561 and DOMON domain-containing protein At4g12980 (394 aa).

The N-terminal stretch at Met1–Ser24 is a signal peptide. Positions Leu49 to Gly169 constitute a DOMON domain. The region spanning Gly184–Leu381 is the Cytochrome b561 domain. A run of 2 helical transmembrane segments spans residues Ile220–Ala240 and Ala252–Trp272. Heme b contacts are provided by His221, His257, and His290. A helical transmembrane segment spans residues Asn292 to Pro312. His326 is a binding site for heme b. 2 consecutive transmembrane segments (helical) span residues Gly328–Leu348 and Val361–Leu381.

Requires heme b as cofactor.

The protein resides in the membrane. May act as a catecholamine-responsive trans-membrane electron transporter. In Arabidopsis thaliana (Mouse-ear cress), this protein is Cytochrome b561 and DOMON domain-containing protein At4g12980.